Here is a 217-residue protein sequence, read N- to C-terminus: Putative thymidylate synthase (217 aa).

Residue Cys-139 is part of the active site.

It belongs to the thymidylate synthase family. Archaeal-type ThyA subfamily. Monomer.

The protein localises to the cytoplasm. The protein operates within pyrimidine metabolism; dTTP biosynthesis. In terms of biological role, may catalyze the biosynthesis of dTMP using an unknown cosubstrate. This Methanosarcina acetivorans (strain ATCC 35395 / DSM 2834 / JCM 12185 / C2A) protein is Putative thymidylate synthase.